Here is an 82-residue protein sequence, read N- to C-terminus: Small ribosomal subunit protein bS18 (82 aa).

Residues 1–10 show a composition bias toward polar residues; sequence MTDTNQNSSR. The disordered stretch occupies residues 1-21; that stretch reads MTDTNQNSSRRPFHRRRKTCP.

It belongs to the bacterial ribosomal protein bS18 family. In terms of assembly, part of the 30S ribosomal subunit. Forms a tight heterodimer with protein bS6.

In terms of biological role, binds as a heterodimer with protein bS6 to the central domain of the 16S rRNA, where it helps stabilize the platform of the 30S subunit. The sequence is that of Small ribosomal subunit protein bS18 from Bartonella tribocorum (strain CIP 105476 / IBS 506).